Here is a 274-residue protein sequence, read N- to C-terminus: Probable eukaryotic translation initiation factor 3 subunit J (274 aa).

2 disordered regions span residues 1 to 110 and 207 to 245; these read MDSW…KEAM and KEQQEKTQSKRGAAAPAAKPVSTAAPSKKGGKPTVNVNS. The segment covering 38 to 47 has biased composition (acidic residues); sequence DEEDEDEEEN. Over residues 52–73 the composition is skewed to low complexity; that stretch reads QNDSHSVSQKSSSSSQNDQGSN. A compositionally biased stretch (basic and acidic residues) spans 82-110; sequence IQERNFEKAIKASEAAAKEESLESSKEAM. Low complexity predominate over residues 219–234; it reads AAAPAAKPVSTAAPSK.

The protein belongs to the eIF-3 subunit J family. In terms of assembly, component of the eukaryotic translation initiation factor 3 (eIF-3) complex. The eIF-3 complex appears to include tif32/eif3a, SPAC25G10.08/eif3b, tif33/eif3c, SPBC4C3.07/eif3f, tif35/eif3g and sum1/eif3i. This set of common subunits may also associate exclusively with either moe1/eif3d and int6/eif3e, or with SPAC821.05/eif3h and SPAC1751.03/eif3m. The eIF-3 complex may also include SPAC3A12.13c/eif3j. Interacts with sad1.

It localises to the cytoplasm. Its function is as follows. Component of the eukaryotic translation initiation factor 3 (eIF-3) complex, which is involved in protein synthesis of a specialized repertoire of mRNAs and, together with other initiation factors, stimulates binding of mRNA and methionyl-tRNAi to the 40S ribosome. The eIF-3 complex specifically targets and initiates translation of a subset of mRNAs involved in cell proliferation. In Schizosaccharomyces pombe (strain 972 / ATCC 24843) (Fission yeast), this protein is Probable eukaryotic translation initiation factor 3 subunit J.